The primary structure comprises 975 residues: Translation initiation factor IF-2 (975 aa).

Positions 48–63 are enriched in basic and acidic residues; it reads DHLRKSHGATDGDKRK. Disordered stretches follow at residues 48-84 and 96-388; these read DHLR…GKAR and FVKR…QAPT. A compositionally biased stretch (low complexity) spans 104 to 115; it reads ETGADQAQAQTD. The segment covering 120-177 has biased composition (basic and acidic residues); the sequence is AELKRREEEARREAELLEKQAQELRERQERLEREEAERRAREEAAEAERRRAEEEAAA. Residues 178–211 show a composition bias toward low complexity; it reads KRAAAAQAEAAQQAAAAREQAQRAQSEPAEQSAQ. Residues 212-263 are compositionally biased toward basic and acidic residues; it reads DEARAAAERAAQREAAKKAEDAAREAADKARAEQEEIRKRREAAEAEARAIR. Positions 302 to 330 are enriched in low complexity; the sequence is KPAGEAAAARPAAKKPASGAPAPAAAPAG. Positions 359-372 are enriched in gly residues; sequence SSGGVDRGWRGGPK. In terms of domain architecture, tr-type G spans 475 to 644; sequence PRPPVVTVMG…LLQAEVLELK (170 aa). The segment at 484–491 is G1; that stretch reads GHVDHGKT. 484 to 491 serves as a coordination point for GTP; the sequence is GHVDHGKT. The interval 509 to 513 is G2; it reads GITQH. The tract at residues 530 to 533 is G3; it reads DTPG. GTP is bound by residues 530–534 and 584–587; these read DTPGH and NKID. Residues 584–587 form a G4 region; the sequence is NKID. A G5 region spans residues 620-622; it reads SAK.

This sequence belongs to the TRAFAC class translation factor GTPase superfamily. Classic translation factor GTPase family. IF-2 subfamily.

The protein localises to the cytoplasm. Its function is as follows. One of the essential components for the initiation of protein synthesis. Protects formylmethionyl-tRNA from spontaneous hydrolysis and promotes its binding to the 30S ribosomal subunits. Also involved in the hydrolysis of GTP during the formation of the 70S ribosomal complex. This chain is Translation initiation factor IF-2, found in Burkholderia pseudomallei (strain 1710b).